A 490-amino-acid chain; its full sequence is MRYALIASMLGQAAISVAMPSEPAHSPRAAGAQAYASNQAGNYKLTSIAAPVQGNGSPGPSTWNLSIDDTSSGYKQKIVGFGAAVTDATVSAFNELSASTLSQLLDELMTGAGASFSLMRHTIGASDLSGDPAYTYDDNGGNADPGMTGFNLGDRGTAMATMLAQMKGLNSNLQIFGSPWSAPGWMKLNNAIDGNTNNNNLNDGYLTNNGAQYSAAFAQYFVKYIQAFESHGATINAITLQNEPLNSQAGYPTMYMFSYEQGDLIQNYVAPALKAAGLSTKIWAYDHNTDQPDFPEQVMGIAADDVSAVAWHCYATNLDWTVLTNFHNSYPNTDQYMTECWTPSTGAWNQAASFTMGPLQNWARGVAAWTLGTTAQDGPHLSSGGCGTCTGLVTINNGQYTFQTAYYMMAQFSKFMPVGATVLSGTGSYTYSGSGGVQSVASLNPDGTRTVVIENTFGNDIYIHLSTSSGQEWSGNVPTNSVTTWVLPAV.

An N-terminal signal peptide occupies residues 1–28; that stretch reads MRYALIASMLGQAAISVAMPSEPAHSPR. Glu243 acts as the Proton donor in catalysis. Catalysis depends on Glu339, which acts as the Nucleophile.

The protein belongs to the glycosyl hydrolase 30 family.

It is found in the secreted. The protein localises to the extracellular space. The catalysed reaction is Random hydrolysis of (1-&gt;6)-linkages in (1-&gt;6)-beta-D-glucans.. Its function is as follows. Has highest activity on the linear beta-1,6-glucan pustulan. Lower activity against yeast glucan and laminarin (beta-1,3-glucans with beta-1,6-branches). No activity on colloidal chitin, pachyman, starch, cellulose, nigeran, dextran or gentobiose. The polypeptide is Endo-1,6-beta-D-glucanase BGN16.3 (Trichoderma harzianum (Hypocrea lixii)).